The chain runs to 404 residues: Tryptophan synthase beta chain (404 aa).

The residue at position 98 (K98) is an N6-(pyridoxal phosphate)lysine.

It belongs to the TrpB family. In terms of assembly, tetramer of two alpha and two beta chains. Pyridoxal 5'-phosphate is required as a cofactor.

It carries out the reaction (1S,2R)-1-C-(indol-3-yl)glycerol 3-phosphate + L-serine = D-glyceraldehyde 3-phosphate + L-tryptophan + H2O. Its pathway is amino-acid biosynthesis; L-tryptophan biosynthesis; L-tryptophan from chorismate: step 5/5. The beta subunit is responsible for the synthesis of L-tryptophan from indole and L-serine. The chain is Tryptophan synthase beta chain from Rhodopseudomonas palustris (strain BisB18).